The primary structure comprises 356 residues: MQRYPTKQILVGNVKIGGDAPISVQSMTFAKTRDVKECLEQINRLYFAGCDIVRCAVFNKEDIVGLEQVKKESPLPIVADIHFNYSYAVAVSKFVDAIRINPGNIGGKDRIKAVVEACKERNIPIRIGVNSGSLEEQFENKYGRSVKGMVQSALYNIGLLEELEFTDIAVSLKSSDVYNTMQAYRELRPFTSYPFHLGVTEAGTTFHATIKSAIALGGLLLEGIGDTMRVSITGELEEEIKVARAILQDTGLQKSGLNIISCPTCGRLQSDLVSAIKIVEEKTKHIKEPLNVSVMGCVVNAIGEAKGADVAIAFGKGNGLVMRHGEVVARLKEHELVDRFLSEIDDEIKQRASNNG.

Cys262, Cys265, Cys297, and Glu304 together coordinate [4Fe-4S] cluster.

This sequence belongs to the IspG family. Requires [4Fe-4S] cluster as cofactor.

It carries out the reaction (2E)-4-hydroxy-3-methylbut-2-enyl diphosphate + oxidized [flavodoxin] + H2O + 2 H(+) = 2-C-methyl-D-erythritol 2,4-cyclic diphosphate + reduced [flavodoxin]. The protein operates within isoprenoid biosynthesis; isopentenyl diphosphate biosynthesis via DXP pathway; isopentenyl diphosphate from 1-deoxy-D-xylulose 5-phosphate: step 5/6. Its function is as follows. Converts 2C-methyl-D-erythritol 2,4-cyclodiphosphate (ME-2,4cPP) into 1-hydroxy-2-methyl-2-(E)-butenyl 4-diphosphate. The polypeptide is 4-hydroxy-3-methylbut-2-en-1-yl diphosphate synthase (flavodoxin) (Campylobacter fetus subsp. fetus (strain 82-40)).